Consider the following 134-residue polypeptide: Retinoid-binding protein 7 (134 aa).

It belongs to the calycin superfamily. Fatty-acid binding protein (FABP) family. Expressed primarily in kidney, heart and transverse colon. Detected in adult lymph node, appendix, ascending colon, and in fetal heart and spleen.

The protein localises to the cytoplasm. Its function is as follows. Intracellular transport of retinol. The protein is Retinoid-binding protein 7 (RBP7) of Homo sapiens (Human).